The following is a 266-amino-acid chain: MAKMTTLKMKERLEKELQAPNRQFSYNRDNDALTVVQSGKKVTLAIPQIIANYENDGDAAVEKIVYYVEEGFRAAAGNVELENNKANVYPVVRATSFPGETKAGEVLLTDDHTAETKIFYAVDLGKSYRFIEESMLKKAQLTHEEIREAAFNNLANLEIPLKKDSVNGNDFYFVRTNDGYDASRLLNEAFLREMREKLTGEMVLAVPHQDVLIIGDIQDNTGYDVLAHMTMDFFADGLVPITSLPFVYNNGKLEPIFIMAKNRLKE.

It belongs to the UPF0354 family.

In Listeria monocytogenes serovar 1/2a (strain ATCC BAA-679 / EGD-e), this protein is UPF0354 protein lmo1608.